We begin with the raw amino-acid sequence, 361 residues long: MTVSTAQMRFWSPEVRELEPYVPGEQPKIQNLLKLNTNENPYPPSPKVVEAVQAVLHEQADALRLYPDPDATALKQAIAKQQNIDVSQVFVGNGSDEVLAHIFKAFFLQDEPILYPDITYSFYPVYSQFFGTKTKEIPLNESFEIDVRDYTQPNGGVIITNPNAPTSIALSLAEIEQVLQANPDRVVVIDEAYVDFGAESAVSLINRYENLVVCQTTSKSRSLAGLRVGFAIAQSHLIAALEAVKNSFNSYPIDRFAIAAAVASFEDQAYFEEQCQKVITSREKLVRDLTELGFNVLPSKANFIFATHSQHDAGQLAQKLREQGIIVRYFNKPRINQFLRITVGTDEQNARLVQTLKQDIL.

K219 is modified (N6-(pyridoxal phosphate)lysine).

It belongs to the class-II pyridoxal-phosphate-dependent aminotransferase family. Histidinol-phosphate aminotransferase subfamily. Homodimer. It depends on pyridoxal 5'-phosphate as a cofactor.

It carries out the reaction L-histidinol phosphate + 2-oxoglutarate = 3-(imidazol-4-yl)-2-oxopropyl phosphate + L-glutamate. The protein operates within amino-acid biosynthesis; L-histidine biosynthesis; L-histidine from 5-phospho-alpha-D-ribose 1-diphosphate: step 7/9. The protein is Histidinol-phosphate aminotransferase of Acinetobacter baumannii (strain AB307-0294).